A 350-amino-acid chain; its full sequence is Membrane progestin receptor alpha (350 aa).

The Cytoplasmic portion of the chain corresponds to 1-80 (MATMVAQKLS…HNEAVNVWTH (80 aa)). A helical membrane pass occupies residues 81–101 (LLAALVLLLRLAIFVGTVDFW). Over 102 to 105 (GDPH) the chain is Extracellular. A helical membrane pass occupies residues 106 to 126 (ALPLFIIVLASFTYLSLSALA). At 127–139 (HLLQAKSEFWHYS) the chain is on the cytoplasmic side. The chain crosses the membrane as a helical span at residues 140–160 (FFFLDYVGVAVYQFGSALAHF). Topologically, residues 161-165 (YYAIE) are extracellular. A helical membrane pass occupies residues 166–186 (PAWHAQVQTIFLPMAAFLAWL). The Cytoplasmic segment spans residues 187–239 (SCTGSCYNKYIQKPGLLGRTCQEVPSALAYALDISPVAHRILASPEPATDDPA). Residues 240–260 (LLYHKCQVVFFLLAAAFFSAF) traverse the membrane as a helical segment. At 261–278 (MPERWFPGSCHIFGQGHQ) the chain is on the extracellular side. Residues 279–299 (LFHVFLVLCTLAQLEAVALDY) traverse the membrane as a helical segment. The Cytoplasmic portion of the chain corresponds to 300–318 (EARRPIYEPLHTRWPHNFS). The helical transmembrane segment at 319 to 339 (GLFLLTVGSSILTAFLLSQLV) threads the bilayer. Topologically, residues 340–350 (RRKLDLDRKTQ) are extracellular.

This sequence belongs to the ADIPOR family.

Its subcellular location is the cell membrane. Functionally, plasma membrane progesterone (P4) receptor coupled to G proteins. Seems to act through a G(i) mediated pathway. May be involved in oocyte maturation. Involved in neurosteroid inhibition of apoptosis. Also binds dehydroepiandrosterone (DHEA), pregnanolone, pregnenolone and allopregnanolone. The protein is Membrane progestin receptor alpha (PAQR7) of Sus scrofa (Pig).